The primary structure comprises 68 residues: DNA gyrase inhibitor YacG (68 aa).

Zn(2+) contacts are provided by cysteine 10, cysteine 13, cysteine 29, and cysteine 33. The tract at residues 45-68 is disordered; the sequence is EKRIPSDTELSDSDEWSEEDPLKH. A compositionally biased stretch (acidic residues) spans 53 to 68; sequence ELSDSDEWSEEDPLKH.

Belongs to the DNA gyrase inhibitor YacG family. In terms of assembly, interacts with GyrB. It depends on Zn(2+) as a cofactor.

Its function is as follows. Inhibits all the catalytic activities of DNA gyrase by preventing its interaction with DNA. Acts by binding directly to the C-terminal domain of GyrB, which probably disrupts DNA binding by the gyrase. This is DNA gyrase inhibitor YacG from Yersinia pseudotuberculosis serotype O:1b (strain IP 31758).